A 418-amino-acid polypeptide reads, in one-letter code: MLHPRARTMLLLSLPAVAIGIASSLILIVVMKIASVLQNLLWQRLPGTLGIAQDSPFWIIAILTLTGIAVGLVIRFSQGHAGPDPACEPLIGAPVPPSALLGLIVALILGLAGGVSLGPEHPIMTVNIALAVAIGARLLPRVNRMEWTILASAGTIGALFGTPVAAALIFSQTLNGSSEVPLWDRLFAPLMAAAAGALTTGLFFHPHFSLPIAHYGKMEMTDILSGAIVAAIAIAAGMVAVWCLPRLHAMMHQMKNPVLVLGIGGFILGILGVMGGPVSLFKGLDEMQQMVANQAFSTSDYFLLAVIKLAALVVAAASGFRGGRIFPAVFVGVALGLMLHEHVPAVPAAITVSCAILGIVLVVTRDGWLSLFMAAVVVPNTTLLPLLCIVMLPAWLLLAGKPMMMVNRPKQQPPHDNV.

The next 12 helical transmembrane spans lie at 10–30, 54–74, 99–119, 120–140, 149–169, 186–206, 223–243, 258–278, 300–320, 322–342, 343–363, and 371–391; these read LLLS…LIVV, DSPF…GLVI, ALLG…SLGP, EHPI…RLLP, ILAS…AALI, LFAP…FFHP, ILSG…AVWC, VLVL…GGPV, DYFL…ASGF, GGRI…LHEH, VPAV…VLVV, and LFMA…CIVM.

This sequence belongs to the chloride channel (TC 2.A.49) family.

Its subcellular location is the cell membrane. The sequence is that of Putative ion-transport protein YfeO from Escherichia coli O17:K52:H18 (strain UMN026 / ExPEC).